The sequence spans 347 residues: Ornithine transcarbamylase, mitochondrial (347 aa).

The transit peptide at Met1–Lys25 directs the protein to the mitochondrion. Residues Ser84–Thr87, Arg135, His162, and Gln165 contribute to the carbamoyl phosphate site. L-ornithine contacts are provided by Asn194, Asp258, Ser262, and Met263. Catalysis depends on Cys300, which acts as the Proton acceptor. Carbamoyl phosphate is bound by residues Cys300–Leu301 and Arg328.

Belongs to the aspartate/ornithine carbamoyltransferase superfamily. OTCase family.

The protein localises to the mitochondrion matrix. The catalysed reaction is carbamoyl phosphate + L-ornithine = L-citrulline + phosphate + H(+). The protein operates within amino-acid biosynthesis; L-arginine biosynthesis; L-arginine from L-ornithine and carbamoyl phosphate: step 1/3. The chain is Ornithine transcarbamylase, mitochondrial (OTC) from Pachysolen tannophilus (Yeast).